We begin with the raw amino-acid sequence, 503 residues long: Probable cytosol aminopeptidase (503 aa).

Mn(2+)-binding residues include Lys274 and Asp279. The active site involves Lys286. Residues Asp297, Asp356, and Glu358 each contribute to the Mn(2+) site. Arg360 is a catalytic residue.

Belongs to the peptidase M17 family. Requires Mn(2+) as cofactor.

It localises to the cytoplasm. The enzyme catalyses Release of an N-terminal amino acid, Xaa-|-Yaa-, in which Xaa is preferably Leu, but may be other amino acids including Pro although not Arg or Lys, and Yaa may be Pro. Amino acid amides and methyl esters are also readily hydrolyzed, but rates on arylamides are exceedingly low.. The catalysed reaction is Release of an N-terminal amino acid, preferentially leucine, but not glutamic or aspartic acids.. In terms of biological role, presumably involved in the processing and regular turnover of intracellular proteins. Catalyzes the removal of unsubstituted N-terminal amino acids from various peptides. The protein is Probable cytosol aminopeptidase of Burkholderia pseudomallei (strain 1710b).